Reading from the N-terminus, the 316-residue chain is Initiation factor TFIIB homolog (316 aa).

Belongs to the asfivirus C315R family.

In terms of biological role, putative initation factor. This chain is Initiation factor TFIIB homolog, found in Ornithodoros (relapsing fever ticks).